A 371-amino-acid chain; its full sequence is Anhydro-N-acetylmuramic acid kinase (371 aa).

9–16 (GTSMDGID) is an ATP binding site.

Belongs to the anhydro-N-acetylmuramic acid kinase family.

It carries out the reaction 1,6-anhydro-N-acetyl-beta-muramate + ATP + H2O = N-acetyl-D-muramate 6-phosphate + ADP + H(+). It functions in the pathway amino-sugar metabolism; 1,6-anhydro-N-acetylmuramate degradation. It participates in cell wall biogenesis; peptidoglycan recycling. In terms of biological role, catalyzes the specific phosphorylation of 1,6-anhydro-N-acetylmuramic acid (anhMurNAc) with the simultaneous cleavage of the 1,6-anhydro ring, generating MurNAc-6-P. Is required for the utilization of anhMurNAc either imported from the medium or derived from its own cell wall murein, and thus plays a role in cell wall recycling. The polypeptide is Anhydro-N-acetylmuramic acid kinase (Azorhizobium caulinodans (strain ATCC 43989 / DSM 5975 / JCM 20966 / LMG 6465 / NBRC 14845 / NCIMB 13405 / ORS 571)).